Consider the following 124-residue polypeptide: Protein TAR1 (124 aa).

The disordered stretch occupies residues 80 to 124 (KNRTPRHTGFSPSMTSCSKEHRQGTAPKLPSPNYNSGTEGTRFQI). Positions 111–124 (PNYNSGTEGTRFQI) are enriched in polar residues.

It localises to the mitochondrion. Functionally, may be involved in mtDNA stability or mitochondrial gene expression regulation at the post-transcriptional level. The chain is Protein TAR1 (TAR1) from Saccharomyces cerevisiae (strain ATCC 204508 / S288c) (Baker's yeast).